We begin with the raw amino-acid sequence, 341 residues long: DNA-directed RNA polymerase subunit alpha (341 aa).

Positions 1–223 (MEQKRPQLKA…DELSVFGNVE (223 aa)) are alpha N-terminal domain (alpha-NTD). The alpha C-terminal domain (alpha-CTD) stretch occupies residues 268 to 341 (PQPFPTDQDT…LAQFGLALRD (74 aa)).

The protein belongs to the RNA polymerase alpha chain family. In terms of assembly, homodimer. The RNAP catalytic core consists of 2 alpha, 1 beta, 1 beta' and 1 omega subunit. When a sigma factor is associated with the core the holoenzyme is formed, which can initiate transcription.

The catalysed reaction is RNA(n) + a ribonucleoside 5'-triphosphate = RNA(n+1) + diphosphate. In terms of biological role, DNA-dependent RNA polymerase catalyzes the transcription of DNA into RNA using the four ribonucleoside triphosphates as substrates. This Deinococcus radiodurans (strain ATCC 13939 / DSM 20539 / JCM 16871 / CCUG 27074 / LMG 4051 / NBRC 15346 / NCIMB 9279 / VKM B-1422 / R1) protein is DNA-directed RNA polymerase subunit alpha.